The primary structure comprises 124 residues: Holo-[acyl-carrier-protein] synthase (124 aa).

Residues Asp-8 and Glu-56 each coordinate Mg(2+).

Belongs to the P-Pant transferase superfamily. AcpS family. It depends on Mg(2+) as a cofactor.

The protein localises to the cytoplasm. It catalyses the reaction apo-[ACP] + CoA = holo-[ACP] + adenosine 3',5'-bisphosphate + H(+). Its function is as follows. Transfers the 4'-phosphopantetheine moiety from coenzyme A to a Ser of acyl-carrier-protein. The polypeptide is Holo-[acyl-carrier-protein] synthase (Nitratidesulfovibrio vulgaris (strain DP4) (Desulfovibrio vulgaris)).